Reading from the N-terminus, the 224-residue chain is Peroxiredoxin-6 (224 aa).

One can recognise a Thioredoxin domain in the interval 5-169 (LLLGDEAPNF…ILRVIISLQL (165 aa)). The tract at residues 31–40 (DSWGILFSHP) is required and sufficient for targeting to lysosomes and lamellar bodies. Phosphothreonine is present on threonine 44. Cysteine 47 (cysteine sulfenic acid (-SOH) intermediate; for peroxidase activity) is an active-site residue. Lysine 63 is modified (N6-acetyllysine). Tyrosine 89 carries the phosphotyrosine modification. Residue aspartate 140 is the For phospholipase activity of the active site. Threonine 177 is modified (phosphothreonine; by MAPK). An N6-acetyllysine; alternate modification is found at lysine 209. Position 209 is an N6-succinyllysine; alternate (lysine 209).

It belongs to the peroxiredoxin family. Prx6 subfamily. Homodimer. Interacts with GSTP1; mediates PRDX6 glutathionylation and regeneration. Interacts with APEX1. Interacts with STH. May interact with FAM168B. May interact with HTR2A. Requires Does not need Ca(2+) as cofactor. as cofactor. Post-translationally, irreversibly inactivated by overoxidation of Cys-47 to sulfinic acid (Cys-SO(2)H) and sulfonic acid (Cys-SO(3)H) forms upon oxidative stress. Phosphorylation at Thr-177 by MAP kinases increases the phospholipase activity of the enzyme. The phosphorylated form exhibits a greater lysophosphatidylcholine acyltransferase activity compared to the non-phosphorylated form.

The protein localises to the cytoplasm. It is found in the lysosome. The enzyme catalyses a hydroperoxide + 2 glutathione = an alcohol + glutathione disulfide + H2O. The catalysed reaction is a 1,2-diacyl-sn-glycero-3-phosphocholine + H2O = a 1-acyl-sn-glycero-3-phosphocholine + a fatty acid + H(+). It carries out the reaction a 1-acyl-sn-glycero-3-phosphocholine + an acyl-CoA = a 1,2-diacyl-sn-glycero-3-phosphocholine + CoA. It catalyses the reaction 1-hexadecanoyl-sn-glycero-3-phosphocholine + hexadecanoyl-CoA = 1,2-dihexadecanoyl-sn-glycero-3-phosphocholine + CoA. The enzyme catalyses 1,2-dihexadecanoyl-sn-glycero-3-phosphocholine + H2O = 1-hexadecanoyl-sn-glycero-3-phosphocholine + hexadecanoate + H(+). In terms of biological role, thiol-specific peroxidase that catalyzes the reduction of hydrogen peroxide and organic hydroperoxides to water and alcohols, respectively. Can reduce H(2)O(2) and short chain organic, fatty acid, and phospholipid hydroperoxides. Also has phospholipase activity, and can therefore either reduce the oxidized sn-2 fatty acyl group of phospholipids (peroxidase activity) or hydrolyze the sn-2 ester bond of phospholipids (phospholipase activity). These activities are dependent on binding to phospholipids at acidic pH and to oxidized phospholipds at cytosolic pH. Plays a role in cell protection against oxidative stress by detoxifying peroxides and in phospholipid homeostasis. Exhibits acyl-CoA-dependent lysophospholipid acyltransferase which mediates the conversion of lysophosphatidylcholine (1-acyl-sn-glycero-3-phosphocholine or LPC) into phosphatidylcholine (1,2-diacyl-sn-glycero-3-phosphocholine or PC). Shows a clear preference for LPC as the lysophospholipid and for palmitoyl CoA as the fatty acyl substrate. The chain is Peroxiredoxin-6 (PRDX6) from Bos taurus (Bovine).